Reading from the N-terminus, the 409-residue chain is Protein PHOSPHATE STARVATION RESPONSE 1 (409 aa).

The segment covering 1-15 (MEARPVHRSGSRDLT) has biased composition (basic and acidic residues). Disordered stretches follow at residues 1 to 42 (MEAR…NSQL), 86 to 108 (EKQQ…NNDS), and 178 to 226 (ETNS…TGKA). 2 stretches are compositionally biased toward polar residues: residues 16-26 (RTSSIPSTQKP) and 90-108 (HYTG…NNDS). The span at 192 to 224 (QIPQPQIVQQQPSPSVELRPVSTTSSNSNNGTG) shows a compositional bias: low complexity. In terms of domain architecture, HTH myb-type spans 222-282 (GTGKARMRWT…HLQKYRTARY (61 aa)). The H-T-H motif DNA-binding region spans 253–278 (PKGVLKIMKVEGLTIYHVKSHLQKYR). Residues 314-334 (TEALRLQMEVQKQLHEQLEIQ) are a coiled coil. The LHEQLE motif lies at 327–332 (LHEQLE). A compositionally biased stretch (polar residues) spans 358–370 (GLTKGTASTSDSA). Residues 358 to 409 (GLTKGTASTSDSAAKSEQEDKKTADSKEVPEEETRKCEELESPQPKRPKIDN) form a disordered region. Positions 371-396 (AKSEQEDKKTADSKEVPEEETRKCEE) are enriched in basic and acidic residues. At S399 the chain carries Phosphoserine.

Belongs to the MYB-CC family. In terms of assembly, homodimers and heterodimers. Interacts with SPX1 in a Pi-dependent manner. Does not interact with PHL2 or PHL3. Post-translationally, sumoylated by SIZ1. Sumoylation controls phosphate deficiency responses.

Its subcellular location is the nucleus. In terms of biological role, transcription factor involved in phosphate starvation signaling. Binds as a dimer to P1BS, an imperfect palindromic sequence 5'-GNATATNC-3', to promote the expression of inorganic phosphate (Pi) starvation-responsive genes. SPX1 is a competitive inhibitor of this DNA-binding. PHR1 binding to its targets is low Pi-dependent. Regulates the expression of miR399. Regulates the expression of IPS1 (At3g09922), a non-coding RNA that mimics the target of miR399 to block the cleavage of PHO2 under Pi-deficient conditions. Regulates lipid remodeling and triacylglycerol accumulation during phosphorus starvation. Required for the shoot-specific hypoxic response. Regulates FER1 expression upon phosphate starvation, linking iron and phosphate homeostasis. Contributes to the homeostasis of both sulfate and phosphate in plants under phosphate deficiency. Required for adaptation to high light and retaining functional photosynthesis during phosphate starvation. Involved in the coregulation of Zn and Pi homeostasis. The protein is Protein PHOSPHATE STARVATION RESPONSE 1 of Arabidopsis thaliana (Mouse-ear cress).